Consider the following 432-residue polypeptide: Hexane cyclase pydB (432 aa).

A signal peptide spans 1–20 (MMHQSLGLGLVVFVAAPVVA). Residues Asn-59, Asn-78, Asn-153, and Asn-308 are each glycosylated (N-linked (GlcNAc...) asparagine).

Belongs to the Diels-Alderase family.

Its pathway is mycotoxin biosynthesis. In terms of biological role, hexane cyclase; part of the gene cluster that mediates the biosynthesis of pyrrocidines, fungal natural products containing a macrocyclic para-cyclophane connected to a decahydrofluorene ring system that show potent antibiotic activities toward Gram-negative bacteria. Within the pathway, pydB functions synergistically with pydE, pydX and pydZ to form the cyclophane. The pathway begins with the PKS-NRPS pydA which, with the help of the trans-enoyl reductase pydC, synthesizes the polyketide-tyrosyl acyl thioester product which can be reductively off-loaded by the terminal reductase (R) domain in pydA. The alpha/beta hydrolase pydG is then required to catalyze the subsequent Knoevenagel condensation that affords the 3-pyrrolin-2-one ring, whereas the four proteins pydB, pydE, pydX and pydZ then function synergistically to form the cyclophane. PydB and the membrane-bound pydX and pydZ are lipid-binding proteins that can sequester and mold the pdyG product into the inverse S-shape. Binding of the medium chain reductase pydE to the complex would trigger the cascade oxidative cyclization. PydY is involved the Diels-Alder cycloaddition that forms the decahydrofluorene core. Additional non-enzymatic hydroxylation yields pyrrocidine A2 which can be further reduced into pyrrocidine B by an endogenous reductase. This is Hexane cyclase pydB from Acremonium sp.